The chain runs to 619 residues: UvrABC system protein C (619 aa).

The region spanning 20-98 is the GIY-YIG domain; the sequence is TAPGVYRMYA…IKSLSPRYNV (79 aa). Residues 207–242 enclose the UVR domain; that stretch reads DQLGEEIMHSMQQASEALEFERAARLRDLLSSLRSM.

It belongs to the UvrC family. In terms of assembly, interacts with UvrB in an incision complex.

The protein resides in the cytoplasm. The UvrABC repair system catalyzes the recognition and processing of DNA lesions. UvrC both incises the 5' and 3' sides of the lesion. The N-terminal half is responsible for the 3' incision and the C-terminal half is responsible for the 5' incision. In Xanthomonas euvesicatoria pv. vesicatoria (strain 85-10) (Xanthomonas campestris pv. vesicatoria), this protein is UvrABC system protein C.